The following is a 150-amino-acid chain: Large ribosomal subunit protein bL9 (150 aa).

This sequence belongs to the bacterial ribosomal protein bL9 family.

Functionally, binds to the 23S rRNA. The protein is Large ribosomal subunit protein bL9 of Corynebacterium efficiens (strain DSM 44549 / YS-314 / AJ 12310 / JCM 11189 / NBRC 100395).